The chain runs to 127 residues: UPF0389 protein GA21628 (127 aa).

A helical membrane pass occupies residues 69-88 (IRLANIMIALTVIGCGIMVY).

The protein belongs to the UPF0389 family.

The protein localises to the membrane. The sequence is that of UPF0389 protein GA21628 from Drosophila pseudoobscura pseudoobscura (Fruit fly).